Consider the following 255-residue polypeptide: Tryptophan synthase alpha chain (255 aa).

Catalysis depends on proton acceptor residues Glu-49 and Asp-60.

It belongs to the TrpA family. As to quaternary structure, tetramer of two alpha and two beta chains.

The catalysed reaction is (1S,2R)-1-C-(indol-3-yl)glycerol 3-phosphate + L-serine = D-glyceraldehyde 3-phosphate + L-tryptophan + H2O. It functions in the pathway amino-acid biosynthesis; L-tryptophan biosynthesis; L-tryptophan from chorismate: step 5/5. Its function is as follows. The alpha subunit is responsible for the aldol cleavage of indoleglycerol phosphate to indole and glyceraldehyde 3-phosphate. This chain is Tryptophan synthase alpha chain, found in Desulfovibrio desulfuricans (strain ATCC 27774 / DSM 6949 / MB).